A 200-amino-acid chain; its full sequence is 3-isopropylmalate dehydratase small subunit (200 aa).

It belongs to the LeuD family. LeuD type 1 subfamily. In terms of assembly, heterodimer of LeuC and LeuD.

It catalyses the reaction (2R,3S)-3-isopropylmalate = (2S)-2-isopropylmalate. Its pathway is amino-acid biosynthesis; L-leucine biosynthesis; L-leucine from 3-methyl-2-oxobutanoate: step 2/4. Catalyzes the isomerization between 2-isopropylmalate and 3-isopropylmalate, via the formation of 2-isopropylmaleate. The chain is 3-isopropylmalate dehydratase small subunit from Vibrio campbellii (strain ATCC BAA-1116).